A 360-amino-acid chain; its full sequence is Peptide chain release factor 1 (360 aa).

Position 236 is an N5-methylglutamine (Gln236).

The protein belongs to the prokaryotic/mitochondrial release factor family. In terms of processing, methylated by PrmC. Methylation increases the termination efficiency of RF1.

It is found in the cytoplasm. Peptide chain release factor 1 directs the termination of translation in response to the peptide chain termination codons UAG and UAA. This chain is Peptide chain release factor 1, found in Limosilactobacillus reuteri subsp. reuteri (strain JCM 1112) (Lactobacillus reuteri).